The chain runs to 118 residues: UPF0295 protein BCE_0593 (118 aa).

2 helical membrane passes run 12 to 32 (IRTF…LGVF) and 43 to 63 (FMMV…WIGM).

This sequence belongs to the UPF0295 family.

The protein resides in the cell membrane. This chain is UPF0295 protein BCE_0593, found in Bacillus cereus (strain ATCC 10987 / NRS 248).